The following is a 185-amino-acid chain: Elongation factor P (185 aa).

This sequence belongs to the elongation factor P family.

The protein resides in the cytoplasm. Its pathway is protein biosynthesis; polypeptide chain elongation. Its function is as follows. Involved in peptide bond synthesis. Stimulates efficient translation and peptide-bond synthesis on native or reconstituted 70S ribosomes in vitro. Probably functions indirectly by altering the affinity of the ribosome for aminoacyl-tRNA, thus increasing their reactivity as acceptors for peptidyl transferase. The polypeptide is Elongation factor P (Nitratidesulfovibrio vulgaris (strain DSM 19637 / Miyazaki F) (Desulfovibrio vulgaris)).